A 545-amino-acid chain; its full sequence is MVTIVLNKYKLLDKIHIGQQKLEDLLFNLKSEVKPIDENNIEIEINADRLDLLSSDGIARAIKGLLEKELGEAKYNVTDTEYTLIVDNVRTRPYALAAIVYNAKIDLEELIQFQEKLHGTIGRKRKKVAIGIHDLRKVDSKTIEYKEVPLSYKFVPLYGNKELTISEILEKTEQGKLYGNISIANGVSPAIVQDDGEVLSIPPIINSNKTRLDENTKDFFIDVTGTSFEAVAQTLDIIVSNLAEAGGTIGRVKVLKSANSSQLSSPLFLHKIQNVREEYVKKILGIKTSKEEICKHVMRMRMNCDIENGVIRVTVPQYRVDILNEIDVVEDIAMSIGYNNLEPSKYISTNYGSYDYMTLLERKIRELGIGAGYVEISNFVLIKDEKLFSNKYVKILNPVTEEYNAVRNSLIPGLLDFLSKNQHAKFPIRVFETGDVVVYDSSTDTGFRNDKRAAYAIMDNKVSYEDIQAPIHYILKSLGLEVNYKEENNNIFIEGRSASIFYENEKMGVIGEVNPDVLIRFGIEYPAVIAELYISEIAKRLTNQR.

One can recognise a B5 domain in the interval F268–P343. Positions 321, 327, 330, and 331 each coordinate Mg(2+).

Belongs to the phenylalanyl-tRNA synthetase beta subunit family. Type 2 subfamily. In terms of assembly, tetramer of two alpha and two beta subunits. Mg(2+) serves as cofactor.

The protein resides in the cytoplasm. It catalyses the reaction tRNA(Phe) + L-phenylalanine + ATP = L-phenylalanyl-tRNA(Phe) + AMP + diphosphate + H(+). This is Phenylalanine--tRNA ligase beta subunit from Saccharolobus islandicus (strain L.S.2.15 / Lassen #1) (Sulfolobus islandicus).